Here is a 545-residue protein sequence, read N- to C-terminus: ATP synthase subunit alpha (545 aa).

173-180 (GDRQTGKT) is an ATP binding site.

It belongs to the ATPase alpha/beta chains family. As to quaternary structure, F-type ATPases have 2 components, CF(1) - the catalytic core - and CF(0) - the membrane proton channel. CF(1) has five subunits: alpha(3), beta(3), gamma(1), delta(1), epsilon(1). CF(0) has three main subunits: a(1), b(2) and c(9-12). The alpha and beta chains form an alternating ring which encloses part of the gamma chain. CF(1) is attached to CF(0) by a central stalk formed by the gamma and epsilon chains, while a peripheral stalk is formed by the delta and b chains.

Its subcellular location is the cell membrane. The catalysed reaction is ATP + H2O + 4 H(+)(in) = ADP + phosphate + 5 H(+)(out). Functionally, produces ATP from ADP in the presence of a proton gradient across the membrane. The alpha chain is a regulatory subunit. The polypeptide is ATP synthase subunit alpha (Leifsonia xyli subsp. xyli (strain CTCB07)).